Reading from the N-terminus, the 129-residue chain is Glycine cleavage system H protein (129 aa).

Residues 24 to 106 enclose the Lipoyl-binding domain; it reads SYTVGITEHA…YGEGWFFRVM (83 aa). Residue lysine 65 is modified to N6-lipoyllysine.

The protein belongs to the GcvH family. The glycine cleavage system is composed of four proteins: P, T, L and H. (R)-lipoate is required as a cofactor.

Functionally, the glycine cleavage system catalyzes the degradation of glycine. The H protein shuttles the methylamine group of glycine from the P protein to the T protein. The polypeptide is Glycine cleavage system H protein (Shewanella sp. (strain MR-7)).